Consider the following 1183-residue polypeptide: M-phase phosphoprotein 9 (1183 aa).

Disordered regions lie at residues 28-52, 300-334, and 472-495; these read GLNL…SGKT, KLKQ…EKSD, and ISFS…SFSQ. Positions 324-334 are enriched in basic and acidic residues; the sequence is QSKKTPIEKSD. The tract at residues 401-800 is required for its centrosomal localization; that stretch reads TSNEMKLPSL…EAQVKQVEHE (400 aa). The interaction with CEP97 stretch occupies residues 451–500; it reads KPKQQISGIQPHGLPNALDDRISFSPDSVLEPSMSSPSDIDSFSQASNVT. The segment covering 483-495 has biased composition (low complexity); the sequence is SMSSPSDIDSFSQ. The stretch at 609–804 forms a coiled coil; sequence DLRAYYESEI…KQVEHENMLS (196 aa). S781 carries the phosphoserine; by TTBK2 modification. K784 participates in a covalent cross-link: Glycyl lysine isopeptide (Lys-Gly) (interchain with G-Cter in ubiquitin). At S788 the chain carries Phosphoserine; by TTBK2. Residues 801–1031 form an interaction with KIF24 region; the sequence is NMLSLRHNSR…PVSTLQRTNP (231 aa). Disordered regions lie at residues 863 to 894 and 910 to 999; these read LGHR…SDTP and NWGT…GFSH. Over residues 921–936 the composition is skewed to polar residues; the sequence is SNINPRQTETSVNASR. Residues 949–967 show a composition bias toward low complexity; sequence LNSASQRSSSLPPSNRKSS. S994 bears the Phosphoserine mark. Residues 1109-1174 are a coiled coil; sequence RTLAETERFF…GSVRMTLKKF (66 aa).

In terms of assembly, interacts with CCP110, CEP97 and KIF24. TTBK2-mediated phosphorylation at Ser-781 and Ser-788, promotes its ubiquitination at Lys-784 leading to proteasomal degradation, loss of MPHOSPH9 facilitates the removal of the CP110-CEP97 complex from the mother centrioles, promoting the initiation of ciliogenesis. Phosphorylated in M (mitotic) phase. In terms of processing, ubiquitinated at Lys-784, leading to proteasomal degradation.

The protein resides in the cytoplasm. The protein localises to the cytoskeleton. It is found in the microtubule organizing center. Its subcellular location is the centrosome. It localises to the centriole. The protein resides in the golgi apparatus membrane. Functionally, negatively regulates cilia formation by recruiting the CP110-CEP97 complex (a negative regulator of ciliogenesis) at the distal end of the mother centriole in ciliary cells. At the beginning of cilia formation, MPHOSPH9 undergoes TTBK2-mediated phosphorylation and degradation via the ubiquitin-proteasome system and removes itself and the CP110-CEP97 complex from the distal end of the mother centriole, which subsequently promotes cilia formation. The sequence is that of M-phase phosphoprotein 9 (MPHOSPH9) from Homo sapiens (Human).